The sequence spans 377 residues: MTHDLAASGLRFGIEEEFFLLDASDLDIVRSAPAGFVAACRDTLGEHFAEEMFECQVEVASPVFSTLAEAARFHGQARQRLAHLAMDFGLRSLCVGTHPFADWRRARSNPAAHFARLFEDQGRVARRSLVCGLHVHVEIPPSHDRMAVLQRVLPWLPLLLALSASSPFRGGRRSGLASYRRALCGEWPRMNIPPALPDEDAYRRHLALLRETGCIREDGQVWWMIRPSSHVPTLELRICDACPRLADALSLAGLFRALVGEALDADPRALPVARDACLEENYWQALRYGCAGRYLVEGRCVGAGDWLEMAWRQCRPQARRGNEWAYQHACGLLEETSAARQLRRYRRLREAGQERHPALRRLVEELLEENLQPALAG.

Belongs to the glutamate--cysteine ligase type 2 family. YbdK subfamily.

It catalyses the reaction L-cysteine + L-glutamate + ATP = gamma-L-glutamyl-L-cysteine + ADP + phosphate + H(+). ATP-dependent carboxylate-amine ligase which exhibits weak glutamate--cysteine ligase activity. The protein is Putative glutamate--cysteine ligase 2 of Pseudomonas aeruginosa (strain LESB58).